Consider the following 461-residue polypeptide: Ribulose bisphosphate carboxylase (461 aa).

Asn113 serves as a coordination point for substrate. Residue Lys168 is the Proton acceptor of the active site. Substrate is bound at residue Lys170. Lys193, Asp195, and Glu196 together coordinate Mg(2+). Lys193 carries the post-translational modification N6-carboxylysine. The active-site Proton acceptor is His289. Residues Arg290, His323, and Ser370 each coordinate substrate.

Belongs to the RuBisCO large chain family. Type II subfamily. In terms of assembly, homodimer. Requires Mg(2+) as cofactor.

It carries out the reaction 2 (2R)-3-phosphoglycerate + 2 H(+) = D-ribulose 1,5-bisphosphate + CO2 + H2O. The enzyme catalyses D-ribulose 1,5-bisphosphate + O2 = 2-phosphoglycolate + (2R)-3-phosphoglycerate + 2 H(+). Its function is as follows. RuBisCO catalyzes two reactions: the carboxylation of D-ribulose 1,5-bisphosphate, the primary event in carbon dioxide fixation, as well as the oxidative fragmentation of the pentose substrate. Both reactions occur simultaneously and in competition at the same active site. This Thiomonas intermedia (strain K12) (Thiobacillus intermedius) protein is Ribulose bisphosphate carboxylase.